Here is a 122-residue protein sequence, read N- to C-terminus: Small ribosomal subunit protein uS13 (122 aa).

The interval 94–122 is disordered; sequence KQLPVRGQRTHTNARTRKGKAKPIAGKKK.

The protein belongs to the universal ribosomal protein uS13 family. As to quaternary structure, part of the 30S ribosomal subunit. Forms a loose heterodimer with protein S19. Forms two bridges to the 50S subunit in the 70S ribosome.

Functionally, located at the top of the head of the 30S subunit, it contacts several helices of the 16S rRNA. In the 70S ribosome it contacts the 23S rRNA (bridge B1a) and protein L5 of the 50S subunit (bridge B1b), connecting the 2 subunits; these bridges are implicated in subunit movement. Contacts the tRNAs in the A and P-sites. The sequence is that of Small ribosomal subunit protein uS13 from Methylorubrum populi (strain ATCC BAA-705 / NCIMB 13946 / BJ001) (Methylobacterium populi).